The primary structure comprises 357 residues: ATP-dependent 6-phosphofructokinase (357 aa).

ATP is bound by residues G12, 80-81, and 107-110; these read KG and GDGS. D108 provides a ligand contact to Mg(2+). Substrate-binding positions include 131 to 133, R168, 175 to 177, E229, R272, and 278 to 281; these read TID, MGR, and HIQR. The Proton acceptor role is filled by D133.

This sequence belongs to the phosphofructokinase type A (PFKA) family. Mixed-substrate PFK group III subfamily. In terms of assembly, homodimer or homotetramer. It depends on Mg(2+) as a cofactor.

The protein resides in the cytoplasm. The catalysed reaction is beta-D-fructose 6-phosphate + ATP = beta-D-fructose 1,6-bisphosphate + ADP + H(+). It functions in the pathway carbohydrate degradation; glycolysis; D-glyceraldehyde 3-phosphate and glycerone phosphate from D-glucose: step 3/4. Subject to allosteric activation by ADP and other diphosphonucleosides, and inhibition by phosphoenolpyruvate. In terms of biological role, catalyzes the phosphorylation of D-fructose 6-phosphate to fructose 1,6-bisphosphate by ATP, the first committing step of glycolysis. The polypeptide is ATP-dependent 6-phosphofructokinase (Trichormus variabilis (strain ATCC 29413 / PCC 7937) (Anabaena variabilis)).